The primary structure comprises 395 residues: Innexin inx3 (395 aa).

Residues 1-37 (MAVFGMVSAVSGFIKIRYLLDKAVIDNMVFRCHYRIT) lie on the Cytoplasmic side of the membrane. Residues 38–58 (TAILFTCCIIVTANNLIGDPI) traverse the membrane as a helical segment. At 59 to 114 (SCINDGAIPMHVINTFCWITYTYTIPGQQHRQIGTDVAGPGLGNEYGQEKRYHSYY) the chain is on the extracellular side. Residues 115–135 (QWVPFVLFFQGLMFYVPHWVW) traverse the membrane as a helical segment. At 136 to 183 (KNMEDGKIRMITDGLRGMVSVPDDYRRDRQDRILKYFVNSLNTHNGYS) the chain is on the cytoplasmic side. The chain crosses the membrane as a helical span at residues 184–204 (FAYFFCELLNFINVIVNIFMV). Residues 205–272 (DKFLGGAFMS…VLALNILNEK (68 aa)) lie on the Extracellular side of the membrane. Residues 273-293 (IYIFLWFWFIILATISGVAVL) form a helical membrane-spanning segment. The Cytoplasmic portion of the chain corresponds to 294–395 (YSLVVIMMPT…TFGGGKETET (102 aa)). 2 positions are modified to phosphoserine: Ser-366 and Ser-377. At Tyr-381 the chain carries Phosphotyrosine.

Belongs to the pannexin family. In terms of assembly, heterooligomer of Inx2 (via cytoplasmic C-terminal region) and Inx3 (via cytoplasmic C-terminal region). In ovary, expressed in nurse cells and follicle cells. Expressed in embryonic epithelial cells. Ubiquitously expressed in stage 5 embryos. Expressed in foregut and hindgut from stage 11-17 and in proventriculus, epidermis and CNS in stage 16 embryos (at protein level). Expressed in anterior and ventral regions in stage 8 embryos. Repeating epidermal pattern emerges at stage 11, refines to one or two cells at each side of the segment borders by stage 13. Expressed in the imaginal wing disk. In pupae, expressed in the CNS and in secondary and tertiary pigment cells of the retina.

Its subcellular location is the cell membrane. The protein localises to the cell junction. The protein resides in the gap junction. It localises to the cytoplasm. It is found in the lateral cell membrane. Its subcellular location is the apicolateral cell membrane. In terms of biological role, structural components of the gap junctions. Essential for proper epithelial development of the epidermis. This is Innexin inx3 (Inx3) from Drosophila melanogaster (Fruit fly).